Here is a 337-residue protein sequence, read N- to C-terminus: Adenosine deaminase (337 aa).

Residues H15 and H17 each contribute to the Zn(2+) site. Substrate-binding residues include H17, D19, and G172. Position 199 (H199) interacts with Zn(2+). The Proton donor role is filled by E202. Residue D279 participates in Zn(2+) binding.

This sequence belongs to the metallo-dependent hydrolases superfamily. Adenosine and AMP deaminases family. Adenosine deaminase subfamily. Requires Zn(2+) as cofactor.

It carries out the reaction adenosine + H2O + H(+) = inosine + NH4(+). The catalysed reaction is 2'-deoxyadenosine + H2O + H(+) = 2'-deoxyinosine + NH4(+). Catalyzes the hydrolytic deamination of adenosine and 2-deoxyadenosine. The chain is Adenosine deaminase from Enterococcus faecalis (strain ATCC 700802 / V583).